A 126-amino-acid chain; its full sequence is Glycine cleavage system H protein (126 aa).

In terms of domain architecture, Lipoyl-binding spans 22–104 (TVTIGITEYA…YEKAWMVKVK (83 aa)). K63 carries the post-translational modification N6-lipoyllysine.

This sequence belongs to the GcvH family. In terms of assembly, the glycine cleavage system is composed of four proteins: P, T, L and H. It depends on (R)-lipoate as a cofactor.

Its function is as follows. The glycine cleavage system catalyzes the degradation of glycine. The H protein shuttles the methylamine group of glycine from the P protein to the T protein. Functionally, is also involved in protein lipoylation via its role as an octanoyl/lipoyl carrier protein intermediate. The protein is Glycine cleavage system H protein of Staphylococcus carnosus (strain TM300).